We begin with the raw amino-acid sequence, 1382 residues long: Hepatocyte growth factor receptor (1382 aa).

The signal sequence occupies residues 1–24 (MKAPAVLAPGILVLLFTLVQKSYG). At 25 to 935 (ECKEALVKSE…VQPDQNFTGL (911 aa)) the chain is on the extracellular side. The Sema domain occupies 27 to 516 (KEALVKSEMN…TGKKITRIPL (490 aa)). Asparagine 45 carries an N-linked (GlcNAc...) asparagine glycan. Intrachain disulfides connect cysteine 95–cysteine 101, cysteine 98–cysteine 160, cysteine 133–cysteine 141, and cysteine 173–cysteine 176. Residue asparagine 106 is glycosylated (N-linked (GlcNAc...) asparagine). N-linked (GlcNAc...) asparagine glycans are attached at residues asparagine 203 and asparagine 359. Disulfide bonds link cysteine 299–cysteine 364 and cysteine 386–cysteine 398. Residues asparagine 400 and asparagine 406 are each glycosylated (N-linked (GlcNAc...) asparagine). Cystine bridges form between cysteine 521/cysteine 539, cysteine 527/cysteine 562, cysteine 530/cysteine 546, and cysteine 542/cysteine 552. IPT/TIG domains lie at 564 to 656 (PAIY…FSYV), 658 to 740 (PIIT…FSYQ), and 743 to 837 (PIVY…LIYV). A glycan (O-linked (Man) threonine) is linked at threonine 583. 2 N-linked (GlcNAc...) asparagine glycosylation sites follow: asparagine 608 and asparagine 636. 2 O-linked (Man) threonine glycosylation sites follow: threonine 677 and threonine 762. 3 N-linked (GlcNAc...) asparagine glycosylation sites follow: asparagine 786, asparagine 880, and asparagine 931. The chain crosses the membrane as a helical span at residues 936–956 (IAGVISISTIVLLLLGLFLWL). The Cytoplasmic portion of the chain corresponds to 957 to 1379 (KRKKQIKDLG…LSSQDNIDGE (423 aa)). The residue at position 967 (serine 967) is a Phosphoserine. Threonine 978 carries the phosphothreonine modification. Phosphoserine is present on residues serine 991, serine 998, and serine 1001. The residue at position 1004 (tyrosine 1004) is a Phosphotyrosine. The Protein kinase domain maps to 1079-1346 (VHFNEVIGRG…RISAIFSTFI (268 aa)). ATP contacts are provided by residues 1085-1093 (IGRGHFGCV) and lysine 1111. Aspartate 1205 functions as the Proton acceptor in the catalytic mechanism. Positions 1213–1382 (LDEKFTVKVA…QDNIDGEGDT (170 aa)) are interaction with RANBP9. Tyrosine 1231 is modified (phosphotyrosine). Phosphotyrosine; by autocatalysis occurs at positions 1235 and 1236. Position 1290 is a phosphothreonine (threonine 1290). An interaction with MUC20 region spans residues 1321 to 1360 (WHPRAELRPSFSELVSRISAIFSTFIGEHYVHVNATYVNV). Phosphotyrosine; by autocatalysis occurs at positions 1350 and 1357. Residue tyrosine 1366 is modified to Phosphotyrosine.

It belongs to the protein kinase superfamily. Tyr protein kinase family. Heterodimer made of an alpha chain (50 kDa) and a beta chain (145 kDa) which are disulfide linked. Binds PLXNB1. Interacts when phosphorylated with downstream effectors including STAT3, PIK3R1, SRC, PCLG1, GRB2 and GAB1. Interacts with SPSB1, SPSB2 and SPSB4. Interacts with INPP5D/SHIP1. When phosphorylated at Tyr-1357, interacts with INPPL1/SHIP2. Interacts with RANBP9 and RANBP10, as well as SPSB1, SPSB2, SPSB3 and SPSB4. SPSB1 binding occurs in the presence and in the absence of HGF, however HGF treatment has a positive effect on this interaction. Interacts with MUC20; prevents interaction with GRB2 and suppresses hepatocyte growth factor-induced cell proliferation. Interacts with GRB10. Interacts with PTPN1 and PTPN2. Interacts with HSP90AA1 and HSP90AB1; the interaction suppresses MET kinase activity. Interacts with tensin TNS3. Interacts (when phosphorylated) with tensin TNS4 (via SH2 domain); the interaction increases MET protein stability by inhibiting MET endocytosis and subsequent lysosomal degradation. In terms of assembly, (Microbial infection) Interacts with L.monocytogenes InlB. InlB probably dimerizes upon binding to MET, which encourages subsequent dimerization of MET. In terms of processing, autophosphorylated in response to ligand binding on Tyr-1235 and Tyr-1236 in the kinase domain leading to further phosphorylation of Tyr-1350 and Tyr-1357 in the C-terminal multifunctional docking site. Dephosphorylated by PTPRJ at Tyr-1350 and Tyr-1366. Dephosphorylated by PTPN1 and PTPN2. Post-translationally, ubiquitinated. Ubiquitination by CBL regulates the receptor stability and activity through proteasomal degradation. (Microbial infection) Tyrosine phosphorylation is stimulated by L.monocytogenes InlB. In terms of processing, O-mannosylation of IPT/TIG domains by TMEM260 is required for protein maturation. O-mannosylated residues are composed of single mannose glycans that are not elongated or modified.

It localises to the membrane. The enzyme catalyses L-tyrosyl-[protein] + ATP = O-phospho-L-tyrosyl-[protein] + ADP + H(+). In its inactive state, the C-terminal tail interacts with the catalytic domain and inhibits the kinase activity. Upon ligand binding, the C-terminal tail is displaced and becomes phosphorylated, thus increasing the kinase activity. Receptor tyrosine kinase that transduces signals from the extracellular matrix into the cytoplasm by binding to hepatocyte growth factor/HGF ligand. Regulates many physiological processes including proliferation, scattering, morphogenesis and survival. Ligand binding at the cell surface induces autophosphorylation of MET on its intracellular domain that provides docking sites for downstream signaling molecules. Following activation by ligand, interacts with the PI3-kinase subunit PIK3R1, PLCG1, SRC, GRB2, STAT3 or the adapter GAB1. Recruitment of these downstream effectors by MET leads to the activation of several signaling cascades including the RAS-ERK, PI3 kinase-AKT, or PLCgamma-PKC. The RAS-ERK activation is associated with the morphogenetic effects while PI3K/AKT coordinates prosurvival effects. During embryonic development, MET signaling plays a role in gastrulation, development and migration of muscles and neuronal precursors, angiogenesis and kidney formation. In adults, participates in wound healing as well as organ regeneration and tissue remodeling. Also promotes differentiation and proliferation of hematopoietic cells. Its function is as follows. (Microbial infection) Acts as a receptor for Listeria monocytogenes internalin InlB, mediating entry of the pathogen into cells. The chain is Hepatocyte growth factor receptor (MET) from Canis lupus familiaris (Dog).